The chain runs to 414 residues: Putative competence-damage inducible protein (414 aa).

This sequence belongs to the CinA family.

This is Putative competence-damage inducible protein from Listeria monocytogenes serotype 4a (strain HCC23).